Consider the following 219-residue polypeptide: Transcriptional regulatory protein QseB (219 aa).

The Response regulatory domain occupies 2–116 (RILLVEDDTL…EVAARLEALV (115 aa)). D51 carries the 4-aspartylphosphate modification. The ompR/PhoB-type DNA-binding region spans 124–218 (SSELRHGQVT…VHGIGYTLGD (95 aa)).

Phosphorylated by QseC.

The protein localises to the cytoplasm. In terms of biological role, member of a two-component regulatory system QseB/QseC. Activates the flagella regulon by activating transcription of flhDC. The chain is Transcriptional regulatory protein QseB (qseB) from Salmonella typhimurium (strain LT2 / SGSC1412 / ATCC 700720).